The chain runs to 197 residues: Recombination protein RecR (197 aa).

The C4-type zinc finger occupies 57-72 (CSVCFGITEDDPCHLC). Residues 79-174 (TTICVVEEPQ…RVTRLAHGIP (96 aa)) form the Toprim domain.

Belongs to the RecR family.

In terms of biological role, may play a role in DNA repair. It seems to be involved in an RecBC-independent recombinational process of DNA repair. It may act with RecF and RecO. The protein is Recombination protein RecR of Geotalea daltonii (strain DSM 22248 / JCM 15807 / FRC-32) (Geobacter daltonii).